Here is a 576-residue protein sequence, read N- to C-terminus: Proline--tRNA ligase (576 aa).

Belongs to the class-II aminoacyl-tRNA synthetase family. ProS type 1 subfamily. In terms of assembly, homodimer.

The protein resides in the cytoplasm. It catalyses the reaction tRNA(Pro) + L-proline + ATP = L-prolyl-tRNA(Pro) + AMP + diphosphate. Functionally, catalyzes the attachment of proline to tRNA(Pro) in a two-step reaction: proline is first activated by ATP to form Pro-AMP and then transferred to the acceptor end of tRNA(Pro). As ProRS can inadvertently accommodate and process non-cognate amino acids such as alanine and cysteine, to avoid such errors it has two additional distinct editing activities against alanine. One activity is designated as 'pretransfer' editing and involves the tRNA(Pro)-independent hydrolysis of activated Ala-AMP. The other activity is designated 'posttransfer' editing and involves deacylation of mischarged Ala-tRNA(Pro). The misacylated Cys-tRNA(Pro) is not edited by ProRS. The polypeptide is Proline--tRNA ligase (Bordetella pertussis (strain Tohama I / ATCC BAA-589 / NCTC 13251)).